A 64-amino-acid chain; its full sequence is UPF0434 protein Oant_3286 (64 aa).

The protein belongs to the UPF0434 family.

The protein is UPF0434 protein Oant_3286 of Brucella anthropi (strain ATCC 49188 / DSM 6882 / CCUG 24695 / JCM 21032 / LMG 3331 / NBRC 15819 / NCTC 12168 / Alc 37) (Ochrobactrum anthropi).